The primary structure comprises 326 residues: Biotin synthase (326 aa).

In terms of domain architecture, Radical SAM core spans 51–278 (NEVQRSTLLS…TSYVRLSAGR (228 aa)). Residues Cys-66, Cys-70, and Cys-73 each contribute to the [4Fe-4S] cluster site. 4 residues coordinate [2Fe-2S] cluster: Cys-110, Cys-141, Cys-201, and Arg-273.

This sequence belongs to the radical SAM superfamily. Biotin synthase family. Homodimer. Requires [4Fe-4S] cluster as cofactor. [2Fe-2S] cluster serves as cofactor.

It catalyses the reaction (4R,5S)-dethiobiotin + (sulfur carrier)-SH + 2 reduced [2Fe-2S]-[ferredoxin] + 2 S-adenosyl-L-methionine = (sulfur carrier)-H + biotin + 2 5'-deoxyadenosine + 2 L-methionine + 2 oxidized [2Fe-2S]-[ferredoxin]. The protein operates within cofactor biosynthesis; biotin biosynthesis; biotin from 7,8-diaminononanoate: step 2/2. Functionally, catalyzes the conversion of dethiobiotin (DTB) to biotin by the insertion of a sulfur atom into dethiobiotin via a radical-based mechanism. The polypeptide is Biotin synthase (Azoarcus sp. (strain BH72)).